Here is a 279-residue protein sequence, read N- to C-terminus: Phenylalanine 3-hydroxylase (279 aa).

His140, His145, and Glu186 together coordinate Fe cation.

The protein belongs to the biopterin-dependent aromatic amino acid hydroxylase family. Requires Fe(2+) as cofactor.

It catalyses the reaction (6R)-L-erythro-5,6,7,8-tetrahydrobiopterin + L-phenylalanine + O2 = 3-hydroxy-L-phenylalanine + (4aS,6R)-4a-hydroxy-L-erythro-5,6,7,8-tetrahydrobiopterin. Functionally, in vitro, catalyzes the highly regiospecific C-3 hydroxylation of L-phenylalanine (L-Phe) to yield 3-hydroxy-L-phenylalanine (meta-Tyr), an amino acid found in bacterial secondary metabolites such as sanglifehrin A and some pacidamycins. Tetrahydrobiopterin (BH4) seems to be the physiological pterin, however the hydroxylase is also able to use 6-methyltetrahydropterin (6-MePH4). This is Phenylalanine 3-hydroxylase from Streptomyces coeruleorubidus.